The sequence spans 227 residues: Uracil-DNA glycosylase (227 aa).

Asp68 (proton acceptor) is an active-site residue.

This sequence belongs to the uracil-DNA glycosylase (UDG) superfamily. UNG family.

Its subcellular location is the cytoplasm. The enzyme catalyses Hydrolyzes single-stranded DNA or mismatched double-stranded DNA and polynucleotides, releasing free uracil.. Excises uracil residues from the DNA which can arise as a result of misincorporation of dUMP residues by DNA polymerase or due to deamination of cytosine. The sequence is that of Uracil-DNA glycosylase from Mycolicibacterium paratuberculosis (strain ATCC BAA-968 / K-10) (Mycobacterium paratuberculosis).